Consider the following 338-residue polypeptide: Solute-binding protein Rfer_1840 (338 aa).

An N-terminal signal peptide occupies residues 1-25 (MQRRQLLQSMGGLAASTMPFSLAFA). Malonate-binding positions include Arg47, Tyr100, Arg175, Ser197, 214 to 218 (TSSTS), and Glu244.

Belongs to the bacterial solute-binding protein 7 family. As to quaternary structure, the complex is comprised of an extracytoplasmic solute-binding protein and a heteromeric permease formed by two transmembrane proteins.

It localises to the periplasm. In terms of biological role, solute-binding protein that binds malonate (in vitro). Probably part of a tripartite ATP-independent periplasmic (TRAP) transport system that mediates solute transport into the cytoplasm. The sequence is that of Solute-binding protein Rfer_1840 from Albidiferax ferrireducens (strain ATCC BAA-621 / DSM 15236 / T118) (Rhodoferax ferrireducens).